The following is a 195-amino-acid chain: Imidazoleglycerol-phosphate dehydratase (195 aa).

Belongs to the imidazoleglycerol-phosphate dehydratase family.

The protein resides in the cytoplasm. It catalyses the reaction D-erythro-1-(imidazol-4-yl)glycerol 3-phosphate = 3-(imidazol-4-yl)-2-oxopropyl phosphate + H2O. Its pathway is amino-acid biosynthesis; L-histidine biosynthesis; L-histidine from 5-phospho-alpha-D-ribose 1-diphosphate: step 6/9. This is Imidazoleglycerol-phosphate dehydratase from Pelobacter propionicus (strain DSM 2379 / NBRC 103807 / OttBd1).